A 425-amino-acid chain; its full sequence is ATP-dependent RNA helicase eIF4A (425 aa).

Positions 38 to 66 (DTWEDYGLKEDLLKGIYSIGFETPSFIQK) match the Q motif motif. In terms of domain architecture, Helicase ATP-binding spans 69-241 (IQPIIDGRDI…EEILINPVII (173 aa)). An ATP-binding site is contributed by 82–89 (AQSGTGKT). Residues 187–190 (DEAD) carry the DEAD box motif. Residues 252-425 (GIRQYFIDLR…KELPADFSFQ (174 aa)) form the Helicase C-terminal domain.

The protein belongs to the DEAD box helicase family. eIF4A subfamily. Component of the eIF4F complex, which composition varies with external and internal environmental conditions. It is composed of at least eIF4A, eIF4E and eIF4G.

It localises to the cytoplasm. The catalysed reaction is ATP + H2O = ADP + phosphate + H(+). Functionally, ATP-dependent RNA helicase which is a subunit of the eIF4F complex involved in cap recognition and is required for mRNA binding to ribosome. In the current model of translation initiation, eIF4A unwinds RNA secondary structures in the 5'-UTR of mRNAs which is necessary to allow efficient binding of the small ribosomal subunit, and subsequent scanning for the initiator codon. This is ATP-dependent RNA helicase eIF4A (TIF1) from Encephalitozoon cuniculi (strain GB-M1) (Microsporidian parasite).